The chain runs to 141 residues: D-aminoacyl-tRNA deacylase (141 aa).

Residues 133 to 134 (GP) carry the Gly-cisPro motif, important for rejection of L-amino acids motif.

Belongs to the DTD family. Homodimer.

Its subcellular location is the cytoplasm. The catalysed reaction is glycyl-tRNA(Ala) + H2O = tRNA(Ala) + glycine + H(+). It catalyses the reaction a D-aminoacyl-tRNA + H2O = a tRNA + a D-alpha-amino acid + H(+). Its function is as follows. An aminoacyl-tRNA editing enzyme that deacylates mischarged D-aminoacyl-tRNAs. Also deacylates mischarged glycyl-tRNA(Ala), protecting cells against glycine mischarging by AlaRS. Acts via tRNA-based rather than protein-based catalysis; rejects L-amino acids rather than detecting D-amino acids in the active site. By recycling D-aminoacyl-tRNA to D-amino acids and free tRNA molecules, this enzyme counteracts the toxicity associated with the formation of D-aminoacyl-tRNA entities in vivo and helps enforce protein L-homochirality. This is D-aminoacyl-tRNA deacylase from Kineococcus radiotolerans (strain ATCC BAA-149 / DSM 14245 / SRS30216).